A 490-amino-acid chain; its full sequence is Lipoprotein lipase (490 aa).

An N-terminal signal peptide occupies residues 1–25 (MERGRGMGKTALLAVLCLCLRGAAG). The interaction with GPIHBP1 stretch occupies residues 32–53 (MNFEGIESKFSLRTPAEPDEDV). An intrachain disulfide couples cysteine 54 to cysteine 67. N-linked (GlcNAc...) (complex) asparagine glycosylation occurs at asparagine 70. A 3'-nitrotyrosine modification is found at tyrosine 121. Serine 159 functions as the Nucleophile in the catalytic mechanism. The active-site Charge relay system is the aspartate 183. Tyrosine 191 is subject to 3'-nitrotyrosine. Residues alanine 194, arginine 197, serine 199, and aspartate 202 each coordinate Ca(2+). A disulfide bridge connects residues cysteine 243 and cysteine 266. The tract at residues 243 to 266 (CNLGEALRLIAEKGFSDVDQLVKC) is essential for determining substrate specificity. The active-site Charge relay system is histidine 268. 2 cysteine pairs are disulfide-bonded: cysteine 291–cysteine 310 and cysteine 302–cysteine 305. A PLAT domain is found at 341-464 (FHYQVKIHFF…KGEEAAIFVK (124 aa)). 3'-nitrotyrosine is present on tyrosine 343. Asparagine 354 and asparagine 386 each carry an N-linked (GlcNAc...) asparagine glycan. The tract at residues 417 to 421 (WSDWW) is important for interaction with lipoprotein particles. The interval 430-434 (RVRVK) is important for heparin binding. 430-441 (RVRVKSGETQKK) contributes to the heparin binding site. The interaction with GPIHBP1 stretch occupies residues 443–467 (VFCSRDGSSRLGKGEEAAIFVKCLE). Cysteine 445 and cysteine 465 form a disulfide bridge. Residues 471 to 490 (SRKRGGAKKASKENSAHESA) form a disordered region. Over residues 480–490 (ASKENSAHESA) the composition is skewed to basic and acidic residues.

The protein belongs to the AB hydrolase superfamily. Lipase family. In terms of assembly, homodimer. Interacts with GPIHBP1 with 1:1 stoichiometry. Interacts with APOC2; the interaction activates LPL activity in the presence of lipids. Interaction with heparan sulfate proteoglycans is required to protect LPL against loss of activity. Associates with lipoprotein particles in blood plasma. Interacts with LMF1 and SEL1L; interaction with SEL1L is required to prevent aggregation of newly synthesized LPL in the endoplasmic reticulum (ER), and for normal export of LPL from the ER to the extracellular space. N-glycan at Asn-70 is a triantennary complex oligosaccharide containing sialic acid, galactose, mannose, and N-acetylglucosamine, the reducing GlcNAc being sulfated at C6. Post-translationally, tyrosine nitration after lipopolysaccharide (LPS) challenge down-regulates the lipase activity.

It is found in the cell membrane. The protein resides in the secreted. Its subcellular location is the extracellular space. It localises to the extracellular matrix. It catalyses the reaction a triacylglycerol + H2O = a diacylglycerol + a fatty acid + H(+). The catalysed reaction is a 1,2-diacyl-sn-glycero-3-phosphocholine + H2O = a 2-acyl-sn-glycero-3-phosphocholine + a fatty acid + H(+). It carries out the reaction 1,2,3-tri-(9Z-octadecenoyl)-glycerol + H2O = di-(9Z)-octadecenoylglycerol + (9Z)-octadecenoate + H(+). The enzyme catalyses 1,2-di-(9Z-octadecenoyl)-sn-glycero-3-phosphocholine + H2O = (9Z-octadecenoyl)-sn-glycero-3-phosphocholine + (9Z)-octadecenoate + H(+). It catalyses the reaction 1,2,3-tributanoylglycerol + H2O = dibutanoylglycerol + butanoate + H(+). The catalysed reaction is 1,2-dihexadecanoyl-sn-glycero-3-phosphocholine + H2O = hexadecanoyl-sn-glycero-3-phosphocholine + hexadecanoate + H(+). Ca(2+) binding promotes protein stability and formation of the active homodimer. Its function is as follows. Key enzyme in triglyceride metabolism. Catalyzes the hydrolysis of triglycerides from circulating chylomicrons and very low density lipoproteins (VLDL), and thereby plays an important role in lipid clearance from the blood stream, lipid utilization and storage. Although it has both phospholipase and triglyceride lipase activities it is primarily a triglyceride lipase with low but detectable phospholipase activity. Mediates margination of triglyceride-rich lipoprotein particles in capillaries. Recruited to its site of action on the luminal surface of vascular endothelium by binding to GPIHBP1 and cell surface heparan sulfate proteoglycans. This chain is Lipoprotein lipase (LPL), found in Gallus gallus (Chicken).